A 344-amino-acid polypeptide reads, in one-letter code: tRNA N6-adenosine threonylcarbamoyltransferase (344 aa).

His-119 and His-123 together coordinate Fe cation. Substrate is bound by residues Val-141–Gly-145, Asp-174, Gly-187, Asp-191, and Asn-280. Fe cation is bound at residue Asp-310.

The protein belongs to the KAE1 / TsaD family. Requires Fe(2+) as cofactor.

It localises to the cytoplasm. It catalyses the reaction L-threonylcarbamoyladenylate + adenosine(37) in tRNA = N(6)-L-threonylcarbamoyladenosine(37) in tRNA + AMP + H(+). Its function is as follows. Required for the formation of a threonylcarbamoyl group on adenosine at position 37 (t(6)A37) in tRNAs that read codons beginning with adenine. Is involved in the transfer of the threonylcarbamoyl moiety of threonylcarbamoyl-AMP (TC-AMP) to the N6 group of A37, together with TsaE and TsaB. TsaD likely plays a direct catalytic role in this reaction. This is tRNA N6-adenosine threonylcarbamoyltransferase from Listeria innocua serovar 6a (strain ATCC BAA-680 / CLIP 11262).